Reading from the N-terminus, the 525-residue chain is Coronin-2A (525 aa).

WD repeat units lie at residues 80–120 (GHRG…LTKN), 130–170 (GHAR…SVIM), 178–217 (CHQDVILSMSFNTNGSLLATACKDRKIRVLDPRAGTVLQE), 220–263 (YKGH…VPVT), and 269–308 (GSSGVLFPFYDADTNMLYVVGKGDRNIHYYEISANKPHLN). The stretch at 485–524 (QMFYRQQDEIRRLRELVTQREVQAKQLELEIRNLRMNSPR) forms a coiled coil.

Belongs to the WD repeat coronin family. In terms of assembly, binds actin. Component of the N-Cor repressor complex, at least composed of NCOR1, NCOR2, HDAC3, TBL1X, TBL1R, CORO2A and GPS2.

This chain is Coronin-2A (CORO2A), found in Bos taurus (Bovine).